Here is a 76-residue protein sequence, read N- to C-terminus: Conotoxin Am6.3 (76 aa).

A signal peptide spans 1–22 (MKLTCMMIIAVLFLTAWTFATA). 3 cysteine pairs are disulfide-bonded: Cys-52–Cys-67, Cys-59–Cys-71, and Cys-66–Cys-75.

This sequence belongs to the conotoxin O1 superfamily. In terms of processing, is not hydroxylated. As to expression, expressed by the venom duct.

The protein localises to the secreted. Probable toxin that inhibits ion channels. The polypeptide is Conotoxin Am6.3 (Conus amadis (Amadis cone)).